Here is a 331-residue protein sequence, read N- to C-terminus: Tryptophan--tRNA ligase (331 aa).

Residues 10–12 (QPS) and 18–19 (GN) each bind ATP. Residues 11–19 (PSGQLTLGN) carry the 'HIGH' region motif. Aspartate 133 lines the L-tryptophan pocket. Residues 145 to 147 (GED), valine 184, and 193 to 197 (KMSKS) contribute to the ATP site. The 'KMSKS' region signature appears at 193 to 197 (KMSKS).

The protein belongs to the class-I aminoacyl-tRNA synthetase family. Homodimer.

It is found in the cytoplasm. The enzyme catalyses tRNA(Trp) + L-tryptophan + ATP = L-tryptophyl-tRNA(Trp) + AMP + diphosphate + H(+). Functionally, catalyzes the attachment of tryptophan to tRNA(Trp). This is Tryptophan--tRNA ligase from Listeria monocytogenes serovar 1/2a (strain ATCC BAA-679 / EGD-e).